The sequence spans 479 residues: Phosphatidylinositol 4-kinase type 2-alpha (479 aa).

Position 1 is an N-acetylmethionine (Met1). Positions 1–58 (MDETSPLVSPERAQPPEYTFPSGSGAHFPQVPGGAVRVAAAAGSGPSPPCSPGHDRER) are disordered. 5 positions are modified to phosphoserine: Ser5, Ser9, Ser44, Ser47, and Ser51. Residues 31-45 (VPGGAVRVAAAAGSG) show a composition bias toward low complexity. The region spanning 124–453 (SIYPERIYQG…VQMPPVIVET (330 aa)) is the PI3K/PI4K catalytic domain. A G-loop region spans residues 130 to 136 (IYQGSSG). ATP is bound by residues 131–137 (YQGSSGS) and Lys152. Residues 157–159 (EPY) form an important for substrate binding region. Positions 165–178 (KWTKWLQKLCCPCC) are important for interaction with membranes. Residues Cys174, Cys175, Cys177, and Cys178 are each lipidated (S-palmitoyl cysteine). ATP is bound at residue 261-264 (QLFV). The interval 268–276 (KDADYWLRR) is important for interaction with membranes. The segment at 305–313 (RNTDRGNDN) is catalytic loop. Residues 344–364 (AIDNGLAFPLKHPDSWRAYPF) form an activation loop region. Asp346 contacts ATP. The segment at 359 to 368 (WRAYPFYWAW) is important for interaction with membranes. Phosphoserine is present on Ser462.

The protein belongs to the PI3/PI4-kinase family. Type II PI4K subfamily. In terms of assembly, associates with the BLOC-1 and the AP-3 complexes; the BLOC-1 complex is required for optimal binding of PI4K2A to the AP-3 complex. Interacts with BLOC1S5 and DTNBP1. Interacts with ITCH. Interacts with FOS; this interaction may enhance phosphatidylinositol phosphorylation activity. Interacts with ATG9A. In terms of processing, palmitoylated by ZDHHC3 and ZDHHC7 in the CCPCC motif. Palmitoylation is cholesterol-dependent, and required for TGN localization. Ubiquitinated by ITCH; this does not lead to proteasomal degradation. In terms of tissue distribution, detected in brain (at protein level).

It is found in the golgi apparatus. Its subcellular location is the trans-Golgi network membrane. The protein localises to the membrane raft. The protein resides in the endosome. It localises to the endosome membrane. It is found in the cytoplasmic vesicle. Its subcellular location is the cell projection. The protein localises to the dendrite. The protein resides in the presynaptic cell membrane. It localises to the synapse. It is found in the synaptosome. Its subcellular location is the mitochondrion. The protein localises to the membrane. The protein resides in the cell membrane. It localises to the perikaryon. It is found in the neuron projection. The enzyme catalyses a 1,2-diacyl-sn-glycero-3-phospho-(1D-myo-inositol) + ATP = a 1,2-diacyl-sn-glycero-3-phospho-(1D-myo-inositol 4-phosphate) + ADP + H(+). Functionally, membrane-bound phosphatidylinositol-4 kinase (PI4-kinase) that catalyzes the phosphorylation of phosphatidylinositol (PI) to phosphatidylinositol 4-phosphate (PI4P), a lipid that plays important roles in endocytosis, Golgi function, protein sorting and membrane trafficking and is required for prolonged survival of neurons. Besides, phosphorylation of phosphatidylinositol (PI) to phosphatidylinositol 4-phosphate (PI4P) is the first committed step in the generation of phosphatidylinositol 4,5-bisphosphate (PIP2), a precursor of the second messenger inositol 1,4,5-trisphosphate (InsP3). This Mus musculus (Mouse) protein is Phosphatidylinositol 4-kinase type 2-alpha (Pi4k2a).